A 518-amino-acid polypeptide reads, in one-letter code: Membrane-bound lytic murein transglycosylase F (518 aa).

The signal sequence occupies residues 1-21 (MKKLKINYLFIGILALLLAVA). The interval 22–269 (LWPSIPWFGK…RIEEKYLGHG (248 aa)) is non-LT domain. Residues 270-518 (DDFDYVDTRT…SRKGSEEKQN (249 aa)) form an LT domain region. Glu-314 is an active-site residue.

It in the N-terminal section; belongs to the bacterial solute-binding protein 3 family. This sequence in the C-terminal section; belongs to the transglycosylase Slt family.

It is found in the cell outer membrane. The catalysed reaction is Exolytic cleavage of the (1-&gt;4)-beta-glycosidic linkage between N-acetylmuramic acid (MurNAc) and N-acetylglucosamine (GlcNAc) residues in peptidoglycan, from either the reducing or the non-reducing ends of the peptidoglycan chains, with concomitant formation of a 1,6-anhydrobond in the MurNAc residue.. Its function is as follows. Murein-degrading enzyme that degrades murein glycan strands and insoluble, high-molecular weight murein sacculi, with the concomitant formation of a 1,6-anhydromuramoyl product. Lytic transglycosylases (LTs) play an integral role in the metabolism of the peptidoglycan (PG) sacculus. Their lytic action creates space within the PG sacculus to allow for its expansion as well as for the insertion of various structures such as secretion systems and flagella. This Shigella dysenteriae serotype 1 (strain Sd197) protein is Membrane-bound lytic murein transglycosylase F.